A 377-amino-acid polypeptide reads, in one-letter code: RGVQSSGSVFNVNDYGAKGAGDISQAVMKAWKAACASQGPSTVLIPKGNYNMGEVAMQGPCKGSKIGFQIDGVVKAPADPSKFKSDGWVSFYRIDGLTVSGTGTLDGQGQTAWAKNNCDKNPNCKHAAMNLRFDFLKHAMVRDITSLNSKMFHINVLECEDITFQHVTVTAPGTSINTDGIHVGISKGVTITNTKIATGDDCISIGPGSQNVTITQVNCGPGHGISIGSLGRYNNEKEVRGITVKGCTFSGTMNGVRVKTWPNSPPGAATDLTFQDLTMNNVQNPVILDQEYCPYGQCSRQAPSRIKLSNINFNNIRGTSTGKVAVVIACSHGMPCSNMKIGEINLSYRGAGGPATSTCSNVKPTFSGKQVPAIKCA.

An N-terminal signal peptide occupies residues 1–5 (RGVQS). 5 PbH1 repeats span residues 159 to 184 (CEDITFQHVTVTAPGTSINTDGIHVG), 186 to 207 (SKGVTITNTKIATGDDCISIGP), 209 to 229 (SQNVTITQVNCGPGHGISIGS), 239 to 260 (VRGITVKGCTFSGTMNGVRVKT), and 269 to 290 (ATDLTFQDLTMNNVQNPVILDQ). Catalysis depends on Asp-200, which acts as the Proton donor. An N-linked (GlcNAc...) asparagine glycan is attached at Asn-211. The active site involves His-223. A glycan (N-linked (GlcNAc...) asparagine) is linked at Asn-345.

The protein belongs to the glycosyl hydrolase 28 family. Monomer. Glycosylated. In terms of tissue distribution, expressed in pollen (at protein level). Expressed in stem, but not in leaves (at protein level).

It localises to the secreted. Its subcellular location is the cell wall. The protein resides in the golgi apparatus. It is found in the endoplasmic reticulum. The protein localises to the vesicle. The catalysed reaction is [(1-&gt;4)-alpha-D-galacturonosyl](n) + H2O = alpha-D-galacturonate + [(1-&gt;4)-alpha-D-galacturonosyl](n-1). May function in depolymerizing pectin during pollen development, germination, and tube growth. Acts as an exo-polygalacturonase. This Platanus acerifolia (London plane tree) protein is Exopolygalacturonase.